A 99-amino-acid polypeptide reads, in one-letter code: Accessory protein p12I (99 aa).

The SH3-binding motif lies at 4–11 (RLLSPLSP). Residues 12 to 32 (LALTALLLFLLSPGEVSGLLL) traverse the membrane as a helical segment. Positions 33-38 (RPLPAP) match the SH3-binding motif. A helical membrane pass occupies residues 48-68 (ILSNLLFLLFLPLFFSLPLLL). 2 consecutive short sequence motifs (SH3-binding) follow at residues 70-77 (PSLPITMR) and 88-93 (RAPSQP).

This sequence belongs to the HTLV-1 accessory protein p12I family. In terms of assembly, p12I is a homodimer. Interacts with human CANX, CALR, ATP6V0C, IL2RB, IL2RG. Binds to MHC-I heavy chains HLA-A2, HLA-B7 and HLA-Cw4. In terms of processing, ubiquitinated; a fraction of P12I is degraded via the ubiquitin system.

The protein localises to the host endoplasmic reticulum membrane. It localises to the host Golgi apparatus. Its subcellular location is the host cis-Golgi network membrane. In terms of biological role, p12I is a modulator of T-lymphocyte proliferation and immune function and may contribute to establish a persistent infection. Binds and down-modulates cell surface expression of interleukin-2 receptors IL2RB and IL2RG. Also down-modulates cell surface MHC-I molecules by binding to free immature MHC-I heavy chains in the ER and targeting them to the proteasome for degradation. Binding to IL2RB mediates recruitment of JAK1 and JAK3. As a result of this interaction, p12I increases DNA-binding and transcriptional activity of STAT5. The chain is Accessory protein p12I from Homo sapiens (Human).